The following is a 126-amino-acid chain: MAILGLGSDIVEIDRIAAVISRTGDRLARRVLSDNEWRQYQSHQQPVRFLAKRFAVKEAASKAFGTGIRGGLAFNQFEVYNDELGKPGLRFLEHAQEMAQKLGVAHVHVTLADERHYACATVIIES.

Mg(2+) is bound by residues aspartate 9 and glutamate 58.

Belongs to the P-Pant transferase superfamily. AcpS family. It depends on Mg(2+) as a cofactor.

The protein localises to the cytoplasm. The enzyme catalyses apo-[ACP] + CoA = holo-[ACP] + adenosine 3',5'-bisphosphate + H(+). Functionally, transfers the 4'-phosphopantetheine moiety from coenzyme A to a Ser of acyl-carrier-protein. The chain is Holo-[acyl-carrier-protein] synthase from Erwinia tasmaniensis (strain DSM 17950 / CFBP 7177 / CIP 109463 / NCPPB 4357 / Et1/99).